Reading from the N-terminus, the 72-residue chain is Translation initiation factor IF-1 (72 aa).

In terms of domain architecture, S1-like spans 1–72 (MAKDDVIEIQ…TKGRITYRFK (72 aa)).

It belongs to the IF-1 family. As to quaternary structure, component of the 30S ribosomal translation pre-initiation complex which assembles on the 30S ribosome in the order IF-2 and IF-3, IF-1 and N-formylmethionyl-tRNA(fMet); mRNA recruitment can occur at any time during PIC assembly.

The protein localises to the cytoplasm. One of the essential components for the initiation of protein synthesis. Stabilizes the binding of IF-2 and IF-3 on the 30S subunit to which N-formylmethionyl-tRNA(fMet) subsequently binds. Helps modulate mRNA selection, yielding the 30S pre-initiation complex (PIC). Upon addition of the 50S ribosomal subunit IF-1, IF-2 and IF-3 are released leaving the mature 70S translation initiation complex. This is Translation initiation factor IF-1 from Lacticaseibacillus paracasei (strain ATCC 334 / BCRC 17002 / CCUG 31169 / CIP 107868 / KCTC 3260 / NRRL B-441) (Lactobacillus paracasei).